We begin with the raw amino-acid sequence, 274 residues long: Formamidopyrimidine-DNA glycosylase (274 aa).

The active-site Schiff-base intermediate with DNA is the Pro-2. Residue Glu-3 is the Proton donor of the active site. Residue Lys-59 is the Proton donor; for beta-elimination activity of the active site. Positions 93, 112, and 153 each coordinate DNA. The FPG-type zinc-finger motif lies at 238–272; sequence QVHTKFNKPCPNCGELIQKIKLGGRGTYFCKKCQQ. The active-site Proton donor; for delta-elimination activity is Arg-262.

Belongs to the FPG family. Monomer. Zn(2+) serves as cofactor.

It carries out the reaction Hydrolysis of DNA containing ring-opened 7-methylguanine residues, releasing 2,6-diamino-4-hydroxy-5-(N-methyl)formamidopyrimidine.. It catalyses the reaction 2'-deoxyribonucleotide-(2'-deoxyribose 5'-phosphate)-2'-deoxyribonucleotide-DNA = a 3'-end 2'-deoxyribonucleotide-(2,3-dehydro-2,3-deoxyribose 5'-phosphate)-DNA + a 5'-end 5'-phospho-2'-deoxyribonucleoside-DNA + H(+). Functionally, involved in base excision repair of DNA damaged by oxidation or by mutagenic agents. Acts as a DNA glycosylase that recognizes and removes damaged bases. Has a preference for oxidized purines, such as 7,8-dihydro-8-oxoguanine (8-oxoG). Has AP (apurinic/apyrimidinic) lyase activity and introduces nicks in the DNA strand. Cleaves the DNA backbone by beta-delta elimination to generate a single-strand break at the site of the removed base with both 3'- and 5'-phosphates. The protein is Formamidopyrimidine-DNA glycosylase of Mycoplasma mobile (strain ATCC 43663 / 163K / NCTC 11711) (Mesomycoplasma mobile).